A 93-amino-acid polypeptide reads, in one-letter code: UPF0298 protein lwe2074 (93 aa).

This sequence belongs to the UPF0298 family.

It is found in the cytoplasm. This chain is UPF0298 protein lwe2074, found in Listeria welshimeri serovar 6b (strain ATCC 35897 / DSM 20650 / CCUG 15529 / CIP 8149 / NCTC 11857 / SLCC 5334 / V8).